A 251-amino-acid chain; its full sequence is Hydroxyacylglutathione hydrolase (251 aa).

Residues His53, His55, Asp57, His58, His110, Asp127, and His165 each coordinate Zn(2+).

The protein belongs to the metallo-beta-lactamase superfamily. Glyoxalase II family. Monomer. The cofactor is Zn(2+).

It catalyses the reaction an S-(2-hydroxyacyl)glutathione + H2O = a 2-hydroxy carboxylate + glutathione + H(+). It functions in the pathway secondary metabolite metabolism; methylglyoxal degradation; (R)-lactate from methylglyoxal: step 2/2. Thiolesterase that catalyzes the hydrolysis of S-D-lactoyl-glutathione to form glutathione and D-lactic acid. In Cronobacter sakazakii (strain ATCC BAA-894) (Enterobacter sakazakii), this protein is Hydroxyacylglutathione hydrolase.